A 289-amino-acid chain; its full sequence is GTPase Era (289 aa).

An Era-type G domain is found at 2–167; the sequence is KSGFVSLIGR…LREIAKLLPE (166 aa). Residues 10-17 are G1; that stretch reads GRTNAGKS. Position 10–17 (10–17) interacts with GTP; it reads GRTNAGKS. The interval 36 to 40 is G2; that stretch reads NATRR. The interval 57 to 60 is G3; the sequence is DTPG. Residues 57 to 61 and 116 to 119 each bind GTP; these read DTPGL and TKTD. The G4 stretch occupies residues 116–119; it reads TKTD. Positions 146–148 are G5; sequence VNI. The KH type-2 domain occupies 186–274; sequence YRDFILESVY…HLNLQIFVKK (89 aa).

This sequence belongs to the TRAFAC class TrmE-Era-EngA-EngB-Septin-like GTPase superfamily. Era GTPase family. In terms of assembly, monomer.

The protein localises to the cytoplasm. Its subcellular location is the cell inner membrane. In terms of biological role, an essential GTPase that binds both GDP and GTP, with rapid nucleotide exchange. Plays a role in 16S rRNA processing and 30S ribosomal subunit biogenesis and possibly also in cell cycle regulation and energy metabolism. In Campylobacter hominis (strain ATCC BAA-381 / DSM 21671 / CCUG 45161 / LMG 19568 / NCTC 13146 / CH001A), this protein is GTPase Era.